Here is a 412-residue protein sequence, read N- to C-terminus: Divalent metal cation transporter MntH (412 aa).

At 1-19 (MTNYRVESSSGRAARKTRL) the chain is on the cytoplasmic side. The chain crosses the membrane as a helical span at residues 20 to 39 (ALMGPAFIAAIGYIDPGNFA). The Periplasmic portion of the chain corresponds to 40–51 (TNIQAGASFGYQ). The chain crosses the membrane as a helical span at residues 52-71 (LLWVVVWANLMAMLIQILSA). The Cytoplasmic segment spans residues 72-95 (KLGIATGKNLAEQIRDHYPRPVVW). Residues 96-118 (FYWVQAEIIAMATDLAEFIGAAI) traverse the membrane as a helical segment. Topologically, residues 119–125 (GFKLILG) are periplasmic. The chain crosses the membrane as a helical span at residues 126-145 (VSLLQGAVLTGIATFLILML). The Cytoplasmic segment spans residues 146–155 (QRRGQKPLEK). Residues 156–175 (VIGGLLLFVAAAYIVELIFS) form a helical membrane-spanning segment. Topologically, residues 176–196 (QPNLAQLGKGMVIPSLPTSEA) are periplasmic. A helical transmembrane segment spans residues 197–220 (VFLAAGVLGATIMPHVIYLHSSLT). The Cytoplasmic segment spans residues 221–238 (QHLHGGSRQQRYSATKWD). The chain crosses the membrane as a helical span at residues 239–258 (VAIAMTIAGFVNLAMMATAA). The Periplasmic segment spans residues 259–276 (AAFHFSGHTGVADLDEAY). Residues 277–297 (LTLQPLLSHAAATVFGLSLVA) traverse the membrane as a helical segment. Topologically, residues 298 to 327 (AGLSSTVVGTLAGQVVMQGFIRFHIPLWVR) are cytoplasmic. The chain crosses the membrane as a helical span at residues 328–344 (RTVTMLPSFIVILMGLD). Residues 345–350 (PTRILV) lie on the Periplasmic side of the membrane. A helical transmembrane segment spans residues 351-370 (MSQVLLSFGIALALVPLLIF). Residues 371–387 (TSDSKLMGDLVNSKRVK) are Cytoplasmic-facing. A helical transmembrane segment spans residues 388–406 (QTGWVIVVLVVALNIWLLV). Residues 407–412 (GTALGL) lie on the Periplasmic side of the membrane.

This sequence belongs to the NRAMP family.

The protein resides in the cell inner membrane. Its function is as follows. H(+)-stimulated, divalent metal cation uptake system. The chain is Divalent metal cation transporter MntH from Escherichia coli O9:H4 (strain HS).